Consider the following 383-residue polypeptide: Putative glutamate--cysteine ligase 2-2 (383 aa).

The protein belongs to the glutamate--cysteine ligase type 2 family. YbdK subfamily.

It carries out the reaction L-cysteine + L-glutamate + ATP = gamma-L-glutamyl-L-cysteine + ADP + phosphate + H(+). Functionally, ATP-dependent carboxylate-amine ligase which exhibits weak glutamate--cysteine ligase activity. The sequence is that of Putative glutamate--cysteine ligase 2-2 from Legionella pneumophila (strain Lens).